The primary structure comprises 28 residues: Seed allergenic protein 1 (28 aa).

A disordered region spans residues 1–28 (VTXEEGXYSISDQSKVGEQXIRSPDREM).

The sequence is that of Seed allergenic protein 1 from Prunus dulcis (Almond).